A 201-amino-acid chain; its full sequence is Indolepyruvate oxidoreductase subunit IorB (201 aa).

In terms of assembly, heterodimer of the IorA and IorB subunits.

It carries out the reaction indole-3-pyruvate + 2 oxidized [2Fe-2S]-[ferredoxin] + CoA = (indol-3-yl)acetyl-CoA + 2 reduced [2Fe-2S]-[ferredoxin] + CO2 + H(+). Its function is as follows. Catalyzes the ferredoxin-dependent oxidative decarboxylation of arylpyruvates. The sequence is that of Indolepyruvate oxidoreductase subunit IorB (iorB) from Archaeoglobus fulgidus (strain ATCC 49558 / DSM 4304 / JCM 9628 / NBRC 100126 / VC-16).